Consider the following 751-residue polypeptide: Phosphate transporter PHO1 homolog 8 (751 aa).

Residues 1–299 (MKFGKEYVAQ…LRNAAKLYME (299 aa)) enclose the SPX domain. The Cytoplasmic segment spans residues 1–351 (MKFGKEYVAQ…KVTKEKHRIT (351 aa)). A helical transmembrane segment spans residues 352-372 (FSTGFFVGCTVSLVIALGLFI). Over 373–392 (HARNIMGAVGHKLYMETMFP) the chain is Extracellular. A helical transmembrane segment spans residues 393–413 (LYSLFAFVVLHMIMYASNIYF). Residues 414–434 (WKRYRVNYPFIFGFKEGTELG) are Cytoplasmic-facing. The helical transmembrane segment at 435–455 (YGHVLLLSFGLGTLALCAVLV) threads the bilayer. The Extracellular portion of the chain corresponds to 456 to 473 (NMDMEMDPNTNDYKTITE). The helical transmembrane segment at 474-494 (LVPLFVVALVIAISVCPFNIF) threads the bilayer. At 495 to 623 (YRSSRFFFLM…FSINRGNDWK (129 aa)) the chain is on the cytoplasmic side. The EXS domain occupies 558-751 (KSSDVYSTFY…NYDEEEDRDS (194 aa)). A helical membrane pass occupies residues 624-644 (IAAWVFSGLATFYGTYWDIVY). Over 645 to 667 (DWGLLHRPSKSWLREKLLVPHKS) the chain is Extracellular. Residues 668–688 (VYYVAMVVNVVLRLAWLQTVL) form a helical membrane-spanning segment. Over 689 to 751 (DFNISFLHRE…NYDEEEDRDS (63 aa)) the chain is Cytoplasmic.

Belongs to the SYG1 (TC 2.A.94) family. Expressed in root epidermis, leaf hydathodes, trichomes and petioles, stem vascular cylinder, receptacle, stigma apex and pollen grains.

It is found in the cell membrane. Its function is as follows. May transport inorganic phosphate (Pi). The polypeptide is Phosphate transporter PHO1 homolog 8 (PHO1-H8) (Arabidopsis thaliana (Mouse-ear cress)).